A 273-amino-acid polypeptide reads, in one-letter code: Phosphatidylglycerol--prolipoprotein diacylglyceryl transferase (273 aa).

The next 7 helical transmembrane spans lie at 21 to 41 (VSIR…LWLA), 60 to 80 (LLFA…VIFY), 95 to 115 (VWTG…AMFW), 124 to 144 (FFGV…MGRM), 176 to 196 (SQLY…NWFI), 203 to 223 (GSVS…VEFV), and 237 to 257 (ISMG…MMVW). Residue Arg143 participates in a 1,2-diacyl-sn-glycero-3-phospho-(1'-sn-glycerol) binding.

This sequence belongs to the Lgt family.

The protein resides in the cell inner membrane. It catalyses the reaction L-cysteinyl-[prolipoprotein] + a 1,2-diacyl-sn-glycero-3-phospho-(1'-sn-glycerol) = an S-1,2-diacyl-sn-glyceryl-L-cysteinyl-[prolipoprotein] + sn-glycerol 1-phosphate + H(+). The protein operates within protein modification; lipoprotein biosynthesis (diacylglyceryl transfer). Functionally, catalyzes the transfer of the diacylglyceryl group from phosphatidylglycerol to the sulfhydryl group of the N-terminal cysteine of a prolipoprotein, the first step in the formation of mature lipoproteins. This Vibrio parahaemolyticus serotype O3:K6 (strain RIMD 2210633) protein is Phosphatidylglycerol--prolipoprotein diacylglyceryl transferase.